Consider the following 902-residue polypeptide: DNA mismatch repair protein MutS (902 aa).

647–654 (GPNMGGKS) contacts ATP.

This sequence belongs to the DNA mismatch repair MutS family.

This protein is involved in the repair of mismatches in DNA. It is possible that it carries out the mismatch recognition step. This protein has a weak ATPase activity. This Nitrosospira multiformis (strain ATCC 25196 / NCIMB 11849 / C 71) protein is DNA mismatch repair protein MutS.